We begin with the raw amino-acid sequence, 314 residues long: Dual specificity protein phosphatase 2 (314 aa).

Residues 23-144 (EAERTLLLDC…FQGCCPDLCS (122 aa)) form the Rhodanese domain. In terms of domain architecture, Tyrosine-protein phosphatase spans 172–313 (GPVEILPYLF…LLQFETQVLC (142 aa)). C257 (phosphocysteine intermediate) is an active-site residue.

The protein belongs to the protein-tyrosine phosphatase family. Non-receptor class dual specificity subfamily. As to quaternary structure, interacts with MAPK14; this interaction does not lead to catalytic activation of DUSP2 and dephosphrylation of MAPK14. In terms of tissue distribution, expressed in hematopoietic tissues.

It is found in the nucleus. The enzyme catalyses O-phospho-L-tyrosyl-[protein] + H2O = L-tyrosyl-[protein] + phosphate. The catalysed reaction is O-phospho-L-threonyl-[protein] + H2O = L-threonyl-[protein] + phosphate. Dephosphorylates both phosphorylated Thr and Tyr residues in MAPK1, and dephosphorylation of phosphotyrosine is slightly faster than that of phosphothreonine. Can dephosphorylate MAPK1. The protein is Dual specificity protein phosphatase 2 of Homo sapiens (Human).